A 205-amino-acid polypeptide reads, in one-letter code: Small ribosomal subunit protein uS4 (205 aa).

The segment covering 1 to 16 (MSKRETTKYKIDRRMG) has biased composition (basic and acidic residues). The disordered stretch occupies residues 1–46 (MSKRETTKYKIDRRMGENIWGRPKSPVNRRDYGPGQHGQRRKGKLS). The S4 RNA-binding domain maps to 94–157 (SRLDAVVYRA…KQLVLVLESV (64 aa)).

It belongs to the universal ribosomal protein uS4 family. As to quaternary structure, part of the 30S ribosomal subunit. Contacts protein S5. The interaction surface between S4 and S5 is involved in control of translational fidelity.

In terms of biological role, one of the primary rRNA binding proteins, it binds directly to 16S rRNA where it nucleates assembly of the body of the 30S subunit. Functionally, with S5 and S12 plays an important role in translational accuracy. The protein is Small ribosomal subunit protein uS4 of Bartonella tribocorum (strain CIP 105476 / IBS 506).